A 492-amino-acid polypeptide reads, in one-letter code: Gamma-aminobutyric acid receptor subunit alpha-3 (492 aa).

Residues methionine 1–glycine 28 form the signal peptide. Over glutamine 29–lysine 274 the chain is Extracellular. N-linked (GlcNAc...) asparagine glycosylation is present at asparagine 63. A 4-aminobutanoate-binding site is contributed by arginine 119. N-linked (GlcNAc...) asparagine glycans are attached at residues asparagine 163 and asparagine 176. Residue threonine 182 participates in 4-aminobutanoate binding. A disulfide bridge connects residues cysteine 191 and cysteine 205. N-linked (GlcNAc...) asparagine glycosylation occurs at asparagine 228. Residues isoleucine 275–valine 295 traverse the membrane as a helical segment. At serine 296–proline 305 the chain is on the cytoplasmic side. Residues alanine 306 to alanine 325 traverse the membrane as a helical segment. Topologically, residues arginine 326–threonine 336 are extracellular. The helical transmembrane segment at alanine 337 to alanine 357 threads the bilayer. Over threonine 358–lysine 457 the chain is Cytoplasmic. Phosphoserine is present on serine 426. Threonine 427 carries the phosphothreonine modification. Position 433 is a phosphoserine (serine 433). The helical transmembrane segment at isoleucine 458–tyrosine 478 threads the bilayer. The Extracellular segment spans residues valine 479 to glutamine 492.

Belongs to the ligand-gated ion channel (TC 1.A.9) family. Gamma-aminobutyric acid receptor (TC 1.A.9.5) subfamily. GABRA3 sub-subfamily. As to quaternary structure, heteropentamer, formed by a combination of alpha (GABRA1-6), beta (GABRB1-3), gamma (GABRG1-3), delta (GABRD), epsilon (GABRE), rho (GABRR1-3), pi (GABRP) and theta (GABRQ) chains, each subunit exhibiting distinct physiological and pharmacological properties. Binds UBQLN1. Interacts with GPHN.

The protein resides in the postsynaptic cell membrane. The protein localises to the cell membrane. The catalysed reaction is chloride(in) = chloride(out). Functionally, alpha subunit of the heteropentameric ligand-gated chloride channel gated by gamma-aminobutyric acid (GABA), a major inhibitory neurotransmitter in the brain. GABA-gated chloride channels, also named GABA(A) receptors (GABAAR), consist of five subunits arranged around a central pore and contain GABA active binding site(s) located at the alpha and beta subunit interface(s). When activated by GABA, GABAARs selectively allow the flow of chloride anions across the cell membrane down their electrochemical gradient. Chloride influx into the postsynaptic neuron following GABAAR opening decreases the neuron ability to generate a new action potential, thereby reducing nerve transmission. This is Gamma-aminobutyric acid receptor subunit alpha-3 (GABRA3) from Bos taurus (Bovine).